Consider the following 491-residue polypeptide: Glutamyl-tRNA(Gln) amidotransferase subunit A (491 aa).

Active-site charge relay system residues include K77 and S152. Catalysis depends on S176, which acts as the Acyl-ester intermediate.

Belongs to the amidase family. GatA subfamily. Heterotrimer of A, B and C subunits.

It carries out the reaction L-glutamyl-tRNA(Gln) + L-glutamine + ATP + H2O = L-glutaminyl-tRNA(Gln) + L-glutamate + ADP + phosphate + H(+). In terms of biological role, allows the formation of correctly charged Gln-tRNA(Gln) through the transamidation of misacylated Glu-tRNA(Gln) in organisms which lack glutaminyl-tRNA synthetase. The reaction takes place in the presence of glutamine and ATP through an activated gamma-phospho-Glu-tRNA(Gln). The polypeptide is Glutamyl-tRNA(Gln) amidotransferase subunit A (Chlamydia abortus (strain DSM 27085 / S26/3) (Chlamydophila abortus)).